The primary structure comprises 371 residues: MNMDKETEQTLNYLPLGQSDPFGNGNEGTIGDFLGRYCNNPQEISPLTLQSFSLNSQISENFPISGGIRFPPYPGQFGSDREFGSQPTTQESNKSSLLDPDSVSDRVHTTKSNSRKRKSIPSGNGKESPASSSLTASNSKVSGENGGSKGGKRSKQDVAGSSKNGVEKCDSKGDNKDDAKPPEAPKDYIHVRARRGQATDSHSLAERARREKISERMTLLQDLVPGCNRITGKAVMLDEIINYVQSLQRQVEFLSMKLATVNPRMEFNANASLSTEMIQPGESLTQSLYAMACSEQRLPSAYYSLGKNMPRFSDTQFPSNDGFVHTETPGFWENNDLQSIVQMGFGDILQQQSNNNNNNCSEPTLQMKLEP.

Disordered stretches follow at residues 1–25, 65–206, and 352–371; these read MNMD…FGNG, SGGI…SLAE, and QSNN…KLEP. A compositionally biased stretch (polar residues) spans 85–96; that stretch reads SQPTTQESNKSS. Residues 128-142 show a composition bias toward low complexity; it reads SPASSSLTASNSKVS. The span at 165-190 shows a compositional bias: basic and acidic residues; sequence GVEKCDSKGDNKDDAKPPEAPKDYIH. Residues 197–247 enclose the bHLH domain; sequence QATDSHSLAERARREKISERMTLLQDLVPGCNRITGKAVMLDEIINYVQSL.

Homodimer. Interacts with IBH1. Expressed constitutively in roots, leaves, stems, and flowers.

The protein localises to the nucleus. The sequence is that of Transcription factor bHLH77 (BHLH77) from Arabidopsis thaliana (Mouse-ear cress).